The following is a 747-amino-acid chain: DNA ligase (747 aa).

Residues 33-37 (DEEYD), 83-84 (SL), and Glu-113 contribute to the NAD(+) site. Lys-115 acts as the N6-AMP-lysine intermediate in catalysis. Residues Arg-136, Glu-174, Lys-299, and Lys-323 each contribute to the NAD(+) site. Positions 417, 420, 436, and 442 each coordinate Zn(2+). The BRCT domain occupies 659-747 (TGGGVLSGLT…GPGALPEVAE (89 aa)).

It belongs to the NAD-dependent DNA ligase family. LigA subfamily. Mg(2+) serves as cofactor. The cofactor is Mn(2+).

It carries out the reaction NAD(+) + (deoxyribonucleotide)n-3'-hydroxyl + 5'-phospho-(deoxyribonucleotide)m = (deoxyribonucleotide)n+m + AMP + beta-nicotinamide D-nucleotide.. DNA ligase that catalyzes the formation of phosphodiester linkages between 5'-phosphoryl and 3'-hydroxyl groups in double-stranded DNA using NAD as a coenzyme and as the energy source for the reaction. It is essential for DNA replication and repair of damaged DNA. This Leifsonia xyli subsp. xyli (strain CTCB07) protein is DNA ligase.